The chain runs to 38 residues: MKVRSSVKKISPDDQIVRRRGKIYVINKKRPRNKQRQG.

Belongs to the bacterial ribosomal protein bL36 family.

The chain is Large ribosomal subunit protein bL36 from Prochlorococcus marinus (strain MIT 9312).